Consider the following 319-residue polypeptide: Acetyl-coenzyme A carboxylase carboxyl transferase subunit alpha (319 aa).

A CoA carboxyltransferase C-terminal domain is found at 39–296 (EINRLRSKSI…KTQLLLDLTE (258 aa)).

It belongs to the AccA family. As to quaternary structure, acetyl-CoA carboxylase is a heterohexamer composed of biotin carboxyl carrier protein (AccB), biotin carboxylase (AccC) and two subunits each of ACCase subunit alpha (AccA) and ACCase subunit beta (AccD).

The protein resides in the cytoplasm. It carries out the reaction N(6)-carboxybiotinyl-L-lysyl-[protein] + acetyl-CoA = N(6)-biotinyl-L-lysyl-[protein] + malonyl-CoA. It functions in the pathway lipid metabolism; malonyl-CoA biosynthesis; malonyl-CoA from acetyl-CoA: step 1/1. Component of the acetyl coenzyme A carboxylase (ACC) complex. First, biotin carboxylase catalyzes the carboxylation of biotin on its carrier protein (BCCP) and then the CO(2) group is transferred by the carboxyltransferase to acetyl-CoA to form malonyl-CoA. The chain is Acetyl-coenzyme A carboxylase carboxyl transferase subunit alpha from Blochmanniella pennsylvanica (strain BPEN).